A 310-amino-acid polypeptide reads, in one-letter code: ADP-L-glycero-D-manno-heptose-6-epimerase (310 aa).

Residues 10–11 (FI), 31–32 (DN), K38, K53, 75–79 (EGACS), and N92 each bind NADP(+). Catalysis depends on Y140, which acts as the Proton acceptor. K144 contributes to the NADP(+) binding site. N169 is a substrate binding site. NADP(+) contacts are provided by V170 and K178. Residue K178 is the Proton acceptor of the active site. Substrate contacts are provided by residues S180, H187, 201-204 (FSGS), R209, and Y272.

Belongs to the NAD(P)-dependent epimerase/dehydratase family. HldD subfamily. In terms of assembly, homopentamer. It depends on NADP(+) as a cofactor.

The catalysed reaction is ADP-D-glycero-beta-D-manno-heptose = ADP-L-glycero-beta-D-manno-heptose. It participates in nucleotide-sugar biosynthesis; ADP-L-glycero-beta-D-manno-heptose biosynthesis; ADP-L-glycero-beta-D-manno-heptose from D-glycero-beta-D-manno-heptose 7-phosphate: step 4/4. Its function is as follows. Catalyzes the interconversion between ADP-D-glycero-beta-D-manno-heptose and ADP-L-glycero-beta-D-manno-heptose via an epimerization at carbon 6 of the heptose. In Pectobacterium atrosepticum (strain SCRI 1043 / ATCC BAA-672) (Erwinia carotovora subsp. atroseptica), this protein is ADP-L-glycero-D-manno-heptose-6-epimerase.